The following is a 513-amino-acid chain: Probable histone deacetylase 19 (513 aa).

Residues R23–G334 form a histone deacetylase region. The Proton donor/acceptor role is filled by H154. Zn(2+) contacts are provided by D189, H191, and D277. 2 disordered regions span residues H384–R432 and E446–P513. Positions E398–P409 are enriched in acidic residues. The span at D410–R432 shows a compositional bias: basic and acidic residues. Residues N492–Q504 are compositionally biased toward polar residues.

Belongs to the histone deacetylase family. HD type 1 subfamily. Zn(2+) is required as a cofactor.

It localises to the nucleus. The catalysed reaction is N(6)-acetyl-L-lysyl-[histone] + H2O = L-lysyl-[histone] + acetate. In terms of biological role, responsible for the deacetylation of lysine residues on the N-terminal part of the core histones (H2A, H2B, H3 and H4). Histone deacetylation gives a tag for epigenetic repression and plays an important role in transcriptional regulation, cell cycle progression and developmental events. Histone deacetylases act via the formation of large multiprotein complexes. This chain is Probable histone deacetylase 19, found in Zea mays (Maize).